The chain runs to 501 residues: Acetylcholine receptor subunit beta (501 aa).

Positions 1 to 23 (MALGALLLILGILGTPLAPGARG) are cleaved as a signal peptide. The Extracellular portion of the chain corresponds to 24 to 244 (SEAEGQLLKK…VIFYLIIRRK (221 aa)). An intrachain disulfide couples C151 to C165. An N-linked (GlcNAc...) asparagine glycan is attached at N164. A run of 3 helical transmembrane segments spans residues 245 to 269 (PLFY…VFYL), 277 to 295 (MGLS…LLLA), and 311 to 332 (YLMF…VLNL). The Cytoplasmic segment spans residues 333–469 (HHRSPHTHQM…WQFVAMVVDR (137 aa)). A disordered region spans residues 362–381 (RPKPERDQLPEPHHSFSPRS). Positions 363–375 (PKPERDQLPEPHH) are enriched in basic and acidic residues. The residue at position 390 (Y390) is a Phosphotyrosine; by Tyr-kinases. Residues 470-488 (LFLWTFIVFTSVGTLVIFL) form a helical membrane-spanning segment.

This sequence belongs to the ligand-gated ion channel (TC 1.A.9) family. Acetylcholine receptor (TC 1.A.9.1) subfamily. Beta-1/CHRNB1 sub-subfamily. Pentamer of two alpha chains, and one each of the beta, delta, and gamma (in immature muscle) or epsilon (in mature muscle) chains. The muscle heteropentamer composed of alpha-1, beta-1, delta, epsilon subunits interacts with the alpha-conotoxin ImII.

It localises to the postsynaptic cell membrane. The protein localises to the cell membrane. It carries out the reaction K(+)(in) = K(+)(out). The catalysed reaction is Na(+)(in) = Na(+)(out). Functionally, after binding acetylcholine, the AChR responds by an extensive change in conformation that affects all subunits and leads to opening of an ion-conducting channel across the plasma membrane. The chain is Acetylcholine receptor subunit beta (Chrnb1) from Rattus norvegicus (Rat).